Here is a 174-residue protein sequence, read N- to C-terminus: Large ribosomal subunit protein bL12cy (174 aa).

A chloroplast-targeting transit peptide spans 1–45 (MASTTFSSAFSILSLPSSSPSPPPWAPRTLPVANRRRRAAAVAST).

Belongs to the bacterial ribosomal protein bL12 family.

The protein resides in the plastid. Its subcellular location is the chloroplast. The protein is Large ribosomal subunit protein bL12cy (RPL12-2) of Secale cereale (Rye).